Reading from the N-terminus, the 252-residue chain is Hydroxyacylglutathione hydrolase (252 aa).

7 residues coordinate Zn(2+): His-54, His-56, Asp-58, His-59, His-111, Asp-128, and His-166.

The protein belongs to the metallo-beta-lactamase superfamily. Glyoxalase II family. As to quaternary structure, monomer. Zn(2+) serves as cofactor.

It carries out the reaction an S-(2-hydroxyacyl)glutathione + H2O = a 2-hydroxy carboxylate + glutathione + H(+). It participates in secondary metabolite metabolism; methylglyoxal degradation; (R)-lactate from methylglyoxal: step 2/2. In terms of biological role, thiolesterase that catalyzes the hydrolysis of S-D-lactoyl-glutathione to form glutathione and D-lactic acid. This chain is Hydroxyacylglutathione hydrolase, found in Vibrio cholerae serotype O1 (strain ATCC 39541 / Classical Ogawa 395 / O395).